Reading from the N-terminus, the 455-residue chain is UDP-N-acetylmuramoyl-tripeptide--D-alanyl-D-alanine ligase (455 aa).

Residue 107–113 (GSCGKTS) participates in ATP binding.

Belongs to the MurCDEF family. MurF subfamily.

It is found in the cytoplasm. The catalysed reaction is D-alanyl-D-alanine + UDP-N-acetyl-alpha-D-muramoyl-L-alanyl-gamma-D-glutamyl-meso-2,6-diaminopimelate + ATP = UDP-N-acetyl-alpha-D-muramoyl-L-alanyl-gamma-D-glutamyl-meso-2,6-diaminopimeloyl-D-alanyl-D-alanine + ADP + phosphate + H(+). The protein operates within cell wall biogenesis; peptidoglycan biosynthesis. Functionally, involved in cell wall formation. Catalyzes the final step in the synthesis of UDP-N-acetylmuramoyl-pentapeptide, the precursor of murein. This Buchnera aphidicola subsp. Acyrthosiphon pisum (strain APS) (Acyrthosiphon pisum symbiotic bacterium) protein is UDP-N-acetylmuramoyl-tripeptide--D-alanyl-D-alanine ligase.